The sequence spans 585 residues: MTPTLSSSADVLPSLSNMSSETNLLPIQQIAPQLGLSADDLIPYGHHMAKVDISALRPSGPQGKLILVSSITPTPLGEGKTVTTIGLSQGINRLGYRGVACIRQPSLGPVFGVKGGAAGGGAAQVLPMEKLNLHLTGDIHAISAAHNLAAAALDARLYHEQRLGAVFSQQTGMPLLNIDAQQILWPRVVDHNDRALRHIQVGVGGGTHGVERHDHVEITAASELMAILALSESLHDMRQRIGRIILAHSTSGQAITADDLGVAGAMTALMKETIHPTLMQTSEQTPVLIHAGPFANIAHGNSSVLADRLGLQLADYVVTEAGFGSDMGMEKFFNIKYRQSGITPSCVVLVATLRSLKANSGVFDIKPGQPLPAEILNTNIPLLSQGCANLKWHINNAKSYGLPVVVAVNCFPDDSPEELAFLADYALSAGAIACEISEAFAKGGAGTTALAQRVIDACAHASPPVLAYPDNASLEQKIEILAQRYGAREVTFTPQARQQLDSITAAGFGHLPLCIAKTPLSISADASLKNVPHDFVLPVTACAVSAGAGFVRIYAGDIMTMPGLGTQPAYYHIDIDDEGCIRGLS.

74 to 81 (TPLGEGKT) is a binding site for ATP.

Belongs to the formate--tetrahydrofolate ligase family.

It catalyses the reaction (6S)-5,6,7,8-tetrahydrofolate + formate + ATP = (6R)-10-formyltetrahydrofolate + ADP + phosphate. The protein operates within one-carbon metabolism; tetrahydrofolate interconversion. The polypeptide is Formate--tetrahydrofolate ligase (Yersinia enterocolitica serotype O:8 / biotype 1B (strain NCTC 13174 / 8081)).